Here is a 103-residue protein sequence, read N- to C-terminus: uncharacterized protein (103 aa).

A compositionally biased stretch (basic residues) spans 1–10 (MVVKKSKPKN). 2 disordered regions span residues 1–38 (MVVK…KGKK) and 77–103 (AVFS…NEKK).

This is an uncharacterized protein from Schizosaccharomyces pombe (strain 972 / ATCC 24843) (Fission yeast).